A 172-amino-acid polypeptide reads, in one-letter code: AIG2-like protein C (172 aa).

13–18 (YGSLQE) contributes to the substrate binding site. Glu81 functions as the Proton acceptor in the catalytic mechanism.

Belongs to the gamma-glutamylcyclotransferase family. Expressed in flowers, leaves, stems and roots.

Functionally, putative gamma-glutamylcyclotransferase. This Arabidopsis thaliana (Mouse-ear cress) protein is AIG2-like protein C.